Reading from the N-terminus, the 361-residue chain is Gibberellin 20 oxidase 1-D (361 aa).

The 101-residue stretch at 199–299 (GNDSIMRLNY…RKSLAFFLCP (101 aa)) folds into the Fe2OG dioxygenase domain. Fe cation-binding residues include His-224, Asp-226, and His-280. Arg-290 is a catalytic residue.

The protein belongs to the iron/ascorbate-dependent oxidoreductase family. GA20OX subfamily. Fe cation is required as a cofactor. L-ascorbate serves as cofactor. Expressed in nodes and the ear of the elongating stem.

The enzyme catalyses gibberellin A12 + 2 2-oxoglutarate + 3 O2 + H(+) = gibberellin A9 + 2 succinate + 3 CO2 + 2 H2O. The catalysed reaction is gibberellin A53 + 2 2-oxoglutarate + 3 O2 + H(+) = gibberellin A20 + 2 succinate + 3 CO2 + 2 H2O. Its function is as follows. Key oxidase enzyme in the biosynthesis of gibberellin that catalyzes the conversion of GA12 and GA53 to GA9 and GA20 respectively, via a three-step oxidation at C-20 of the GA skeleton. The chain is Gibberellin 20 oxidase 1-D (GA20ox1D) from Triticum aestivum (Wheat).